Reading from the N-terminus, the 70-residue chain is Protein SlyX homolog (70 aa).

Belongs to the SlyX family.

This is Protein SlyX homolog from Nitrobacter winogradskyi (strain ATCC 25391 / DSM 10237 / CIP 104748 / NCIMB 11846 / Nb-255).